The primary structure comprises 471 residues: 3-isopropylmalate dehydratase large subunit (471 aa).

Residues Cys347, Cys407, and Cys410 each coordinate [4Fe-4S] cluster.

The protein belongs to the aconitase/IPM isomerase family. LeuC type 1 subfamily. In terms of assembly, heterodimer of LeuC and LeuD. The cofactor is [4Fe-4S] cluster.

The catalysed reaction is (2R,3S)-3-isopropylmalate = (2S)-2-isopropylmalate. It functions in the pathway amino-acid biosynthesis; L-leucine biosynthesis; L-leucine from 3-methyl-2-oxobutanoate: step 2/4. Catalyzes the isomerization between 2-isopropylmalate and 3-isopropylmalate, via the formation of 2-isopropylmaleate. The protein is 3-isopropylmalate dehydratase large subunit of Granulibacter bethesdensis (strain ATCC BAA-1260 / CGDNIH1).